A 355-amino-acid polypeptide reads, in one-letter code: Putative testis-specific Y-encoded-like protein 3 (355 aa).

The disordered stretch occupies residues 1 to 131 (MADKRAGTPE…GEEKQEVAAE (131 aa)). Residues 93-128 (ASEKAEDANKEEGAIFKKEPAEEVEKQQEGEEKQEV) show a composition bias toward basic and acidic residues.

The protein belongs to the nucleosome assembly protein (NAP) family.

This Homo sapiens (Human) protein is Putative testis-specific Y-encoded-like protein 3 (TSPY26P).